We begin with the raw amino-acid sequence, 361 residues long: DNA replication and repair protein RecF (361 aa).

An ATP-binding site is contributed by glycine 30–threonine 37.

It belongs to the RecF family.

It localises to the cytoplasm. Its function is as follows. The RecF protein is involved in DNA metabolism; it is required for DNA replication and normal SOS inducibility. RecF binds preferentially to single-stranded, linear DNA. It also seems to bind ATP. The protein is DNA replication and repair protein RecF of Clostridium botulinum (strain Eklund 17B / Type B).